The sequence spans 1088 residues: RNA-directed RNA polymerase (1088 aa).

The RdRp catalytic domain maps to 501–687 (LSYGDVTRFL…AKRYIAGGKI (187 aa)).

This sequence belongs to the reoviridae RNA-directed RNA polymerase family. In terms of assembly, interacts with VP3 (Potential). Interacts with VP2; this interaction activates VP1. Interacts with NSP5; this interaction is probably necessary for the formation of functional virus factories. Interacts with NSP2; this interaction is weak. Mg(2+) serves as cofactor.

The protein localises to the virion. The enzyme catalyses RNA(n) + a ribonucleoside 5'-triphosphate = RNA(n+1) + diphosphate. In terms of biological role, RNA-directed RNA polymerase that is involved in both transcription and genome replication. Together with VP3 capping enzyme, forms an enzyme complex positioned near the channels situated at each of the five-fold vertices of the core. Following infection, the outermost layer of the virus is lost, leaving a double-layered particle (DLP) made up of the core and VP6 shell. VP1 then catalyzes the transcription of fully conservative plus-strand genomic RNAs that are extruded through the DLP's channels into the cytoplasm where they function as mRNAs for translation of viral proteins. One copy of each of the viral (+)RNAs is also recruited during core assembly, together with newly synthesized polymerase complexes and VP2. The polymerase of these novo-formed particles catalyzes the synthesis of complementary minus-strands leading to dsRNA formation. To do so, the polymerase specifically recognizes and binds 4 bases 5'-UGUG-3' in the conserved 3'-sequence of plus-strand RNA templates. VP2 presumably activates the autoinhibited VP1-RNA complex to coordinate packaging and genome replication. Once dsRNA synthesis is complete, the polymerase switches to the transcriptional mode, thus providing secondary transcription. The polypeptide is RNA-directed RNA polymerase (Homo sapiens (Human)).